The primary structure comprises 259 residues: NAD kinase (259 aa).

Aspartate 49 serves as the catalytic Proton acceptor. NAD(+) is bound by residues 49 to 50, arginine 54, 118 to 119, aspartate 148, alanine 156, 159 to 164, and alanine 183; these read DG, NE, and TAYNYS.

The protein belongs to the NAD kinase family. The cofactor is a divalent metal cation.

It localises to the cytoplasm. It catalyses the reaction NAD(+) + ATP = ADP + NADP(+) + H(+). In terms of biological role, involved in the regulation of the intracellular balance of NAD and NADP, and is a key enzyme in the biosynthesis of NADP. Catalyzes specifically the phosphorylation on 2'-hydroxyl of the adenosine moiety of NAD to yield NADP. This Xylella fastidiosa (strain 9a5c) protein is NAD kinase.